The following is a 110-amino-acid chain: MVNLFPVFTLIVIITILITTRELSTTMLIVSLVTDYIIINTQYTEQHEMNKFSAQQGLQKNSFDESYNKDKKPNTHISYQWLAPELKEAENKYWWGNDDPYSQPVLAGAS.

Residues 10 to 32 (LIVIITILITTRELSTTMLIVSL) traverse the membrane as a helical segment.

The protein belongs to the asfivirus H108R family.

The protein localises to the virion membrane. This chain is Inner membrane protein H108R, found in African swine fever virus (isolate Pig/Kenya/KEN-50/1950) (ASFV).